The sequence spans 1039 residues: Probable inorganic carbon transporter subunit DabA 1 (1039 aa).

Zn(2+)-binding residues include Cys462, Asp464, His721, and Cys736.

The protein belongs to the inorganic carbon transporter (TC 9.A.2) DabA family. As to quaternary structure, forms a complex with DabB. Zn(2+) serves as cofactor.

It localises to the cell inner membrane. In terms of biological role, part of an energy-coupled inorganic carbon pump. This Nitrobacter hamburgensis (strain DSM 10229 / NCIMB 13809 / X14) protein is Probable inorganic carbon transporter subunit DabA 1.